The chain runs to 296 residues: Putative S-adenosyl-L-methionine-dependent methyltransferase MAV_4764 (296 aa).

Residues Asp-121 and 150–151 each bind S-adenosyl-L-methionine; that span reads DL.

The protein belongs to the UPF0677 family.

Exhibits S-adenosyl-L-methionine-dependent methyltransferase activity. The chain is Putative S-adenosyl-L-methionine-dependent methyltransferase MAV_4764 from Mycobacterium avium (strain 104).